The chain runs to 349 residues: Ornithine carbamoyltransferase, mitochondrial (349 aa).

Carbamoyl phosphate is bound by residues 73–76, Arg124, His151, and Gln154; that span reads STRT. The L-ornithine site is built by Asn195, Asp261, Ser265, and Met266. The active-site Proton acceptor is Cys303. Carbamoyl phosphate contacts are provided by residues 303–304 and Arg330; that span reads CL.

This sequence belongs to the aspartate/ornithine carbamoyltransferase superfamily. OTCase family. As to quaternary structure, homotrimer.

The protein resides in the mitochondrion matrix. The catalysed reaction is carbamoyl phosphate + L-ornithine = L-citrulline + phosphate + H(+). Its pathway is amino-acid biosynthesis; L-arginine biosynthesis; L-arginine from L-ornithine and carbamoyl phosphate: step 1/3. In Coccidioides immitis (strain RS) (Valley fever fungus), this protein is Ornithine carbamoyltransferase, mitochondrial.